Consider the following 494-residue polypeptide: Aspartyl/glutamyl-tRNA(Asn/Gln) amidotransferase subunit B (494 aa).

It belongs to the GatB/GatE family. GatB subfamily. As to quaternary structure, heterotrimer of A, B and C subunits.

It carries out the reaction L-glutamyl-tRNA(Gln) + L-glutamine + ATP + H2O = L-glutaminyl-tRNA(Gln) + L-glutamate + ADP + phosphate + H(+). The catalysed reaction is L-aspartyl-tRNA(Asn) + L-glutamine + ATP + H2O = L-asparaginyl-tRNA(Asn) + L-glutamate + ADP + phosphate + 2 H(+). Functionally, allows the formation of correctly charged Asn-tRNA(Asn) or Gln-tRNA(Gln) through the transamidation of misacylated Asp-tRNA(Asn) or Glu-tRNA(Gln) in organisms which lack either or both of asparaginyl-tRNA or glutaminyl-tRNA synthetases. The reaction takes place in the presence of glutamine and ATP through an activated phospho-Asp-tRNA(Asn) or phospho-Glu-tRNA(Gln). In Synechococcus sp. (strain CC9902), this protein is Aspartyl/glutamyl-tRNA(Asn/Gln) amidotransferase subunit B.